We begin with the raw amino-acid sequence, 61 residues long: Large ribosomal subunit protein eL37 (61 aa).

Zn(2+)-binding residues include C19, C22, C34, and C37. A C4-type zinc finger spans residues 19 to 37; the sequence is CRRCGRNSFNVRKGYCAAC.

The protein belongs to the eukaryotic ribosomal protein eL37 family. Zn(2+) serves as cofactor.

Binds to the 23S rRNA. This Sulfurisphaera tokodaii (strain DSM 16993 / JCM 10545 / NBRC 100140 / 7) (Sulfolobus tokodaii) protein is Large ribosomal subunit protein eL37 (rpl37e).